Here is a 215-residue protein sequence, read N- to C-terminus: Chaperone protein TorD (215 aa).

The protein belongs to the TorD/DmsD family. TorD subfamily.

Its subcellular location is the cytoplasm. In terms of biological role, involved in the biogenesis of TorA. Acts on TorA before the insertion of the molybdenum cofactor and, as a result, probably favors a conformation of the apoenzyme that is competent for acquiring the cofactor. In Vibrio atlanticus (strain LGP32) (Vibrio splendidus (strain Mel32)), this protein is Chaperone protein TorD.